A 771-amino-acid polypeptide reads, in one-letter code: 5-methyltetrahydropteroyltriglutamate--homocysteine methyltransferase (771 aa).

5-methyltetrahydropteroyltri-L-glutamate is bound by residues 16–19 (RELK) and K117. L-homocysteine is bound by residues 443-445 (IGS) and E496. L-methionine-binding positions include 443-445 (IGS) and E496. 5-methyltetrahydropteroyltri-L-glutamate contacts are provided by residues 527–528 (RC) and W573. An L-homocysteine-binding site is contributed by D611. D611 is a binding site for L-methionine. E617 lines the 5-methyltetrahydropteroyltri-L-glutamate pocket. 3 residues coordinate Zn(2+): H653, C655, and E677. The active-site Proton donor is the H706. C738 provides a ligand contact to Zn(2+).

It belongs to the vitamin-B12 independent methionine synthase family. Zn(2+) serves as cofactor.

It catalyses the reaction 5-methyltetrahydropteroyltri-L-glutamate + L-homocysteine = tetrahydropteroyltri-L-glutamate + L-methionine. Its pathway is amino-acid biosynthesis; L-methionine biosynthesis via de novo pathway; L-methionine from L-homocysteine (MetE route): step 1/1. Its function is as follows. Catalyzes the transfer of a methyl group from 5-methyltetrahydrofolate to homocysteine resulting in methionine formation. This is 5-methyltetrahydropteroyltriglutamate--homocysteine methyltransferase from Stutzerimonas stutzeri (strain A1501) (Pseudomonas stutzeri).